Consider the following 95-residue polypeptide: UPF0473 protein ABC1595 (95 aa).

Belongs to the UPF0473 family.

The sequence is that of UPF0473 protein ABC1595 from Shouchella clausii (strain KSM-K16) (Alkalihalobacillus clausii).